Reading from the N-terminus, the 404-residue chain is Cysteine desulfurase IscS (404 aa).

Residues 75–76 (AT), N155, Q183, and 203–205 (TGH) contribute to the pyridoxal 5'-phosphate site. K206 carries the N6-(pyridoxal phosphate)lysine modification. T243 is a pyridoxal 5'-phosphate binding site. The Cysteine persulfide intermediate role is filled by C328. C328 provides a ligand contact to [2Fe-2S] cluster.

This sequence belongs to the class-V pyridoxal-phosphate-dependent aminotransferase family. NifS/IscS subfamily. In terms of assembly, homodimer. Forms a heterotetramer with IscU, interacts with other sulfur acceptors. It depends on pyridoxal 5'-phosphate as a cofactor.

Its subcellular location is the cytoplasm. The enzyme catalyses (sulfur carrier)-H + L-cysteine = (sulfur carrier)-SH + L-alanine. It functions in the pathway cofactor biosynthesis; iron-sulfur cluster biosynthesis. Master enzyme that delivers sulfur to a number of partners involved in Fe-S cluster assembly, tRNA modification or cofactor biosynthesis. Catalyzes the removal of elemental sulfur atoms from cysteine to produce alanine. Functions as a sulfur delivery protein for Fe-S cluster synthesis onto IscU, an Fe-S scaffold assembly protein, as well as other S acceptor proteins. In Enterobacter sp. (strain 638), this protein is Cysteine desulfurase IscS.